Here is a 641-residue protein sequence, read N- to C-terminus: 1-deoxy-D-xylulose-5-phosphate synthase (641 aa).

Thiamine diphosphate is bound by residues His78 and 119-121 (AHS). Asp150 contacts Mg(2+). Thiamine diphosphate contacts are provided by residues 151 to 152 (GA), Asn179, Tyr288, and Glu370. Asn179 contacts Mg(2+).

It belongs to the transketolase family. DXPS subfamily. Homodimer. It depends on Mg(2+) as a cofactor. Thiamine diphosphate serves as cofactor.

It carries out the reaction D-glyceraldehyde 3-phosphate + pyruvate + H(+) = 1-deoxy-D-xylulose 5-phosphate + CO2. The protein operates within metabolic intermediate biosynthesis; 1-deoxy-D-xylulose 5-phosphate biosynthesis; 1-deoxy-D-xylulose 5-phosphate from D-glyceraldehyde 3-phosphate and pyruvate: step 1/1. Functionally, catalyzes the acyloin condensation reaction between C atoms 2 and 3 of pyruvate and glyceraldehyde 3-phosphate to yield 1-deoxy-D-xylulose-5-phosphate (DXP). The polypeptide is 1-deoxy-D-xylulose-5-phosphate synthase (Azorhizobium caulinodans (strain ATCC 43989 / DSM 5975 / JCM 20966 / LMG 6465 / NBRC 14845 / NCIMB 13405 / ORS 571)).